The following is a 493-amino-acid chain: Keratin, type II cuticular Hb3 (493 aa).

The tract at residues 1–111 (MTCGFNSIGC…PNAQCVKQEE (111 aa)) is head. The IF rod domain occupies 111-422 (EKEQIKSLNS…RLLEGEEQRL (312 aa)). Residues 112-146 (KEQIKSLNSRFAAFIDKVRFLEQQNKLLETKLQFY) form a coil 1A region. Residues 147 to 156 (QNRECCQSNL) form a linker 1 region. The tract at residues 157–257 (EPLFAGYIET…YEEEIRILQS (101 aa)) is coil 1B. Lys217 participates in a covalent cross-link: Glycyl lysine isopeptide (Lys-Gly) (interchain with G-Cter in SUMO1). Positions 258–274 (HISDTSVVVKLDNSRDL) are linker 12. The tract at residues 275 to 418 (NMDCIVAEIK…ATYRRLLEGE (144 aa)) is coil 2. The interval 419–493 (EQRLCEGVEA…GGGSCGQGRH (75 aa)) is tail.

Belongs to the intermediate filament family. In terms of assembly, heterotetramer of two type I and two type II keratins. In terms of tissue distribution, synthesis begins in the cortex 10-15 cell layers above the apex of the dermal papilla and ends abruptly in the middle of the cortex.

The chain is Keratin, type II cuticular Hb3 (KRT83) from Homo sapiens (Human).